Reading from the N-terminus, the 308-residue chain is MQSEMNYYKFDRAEWSQFHSQNFTNVTDEELAQLRSLNDEISLDDVKMIYSPLRHLIHIRYEDYQGDMFTLSRFLGMQRNPHTPFIIGIAGSVAVGKSTTARLLQLLLSRAYPEKRVQQMTTDGFLYPNAELERRGILDRKGFPESYDMELLIHFMNNVKNASGALRAPKYSHQIYDIVPGEYELIDRPDILIVEGINVLQLPSKQPIYVSDYFDFSIYVDANPDLIEQWYLERFGILLDTAFTDPNNYYYQYAIGDRADAFAMARQVWRDVNLKNLNEYILPTKNRADIILHKTTGHEIDQVSLRKW.

91–98 (GSVAVGKS) is a binding site for ATP.

Belongs to the prokaryotic pantothenate kinase family.

It is found in the cytoplasm. The enzyme catalyses (R)-pantothenate + ATP = (R)-4'-phosphopantothenate + ADP + H(+). It functions in the pathway cofactor biosynthesis; coenzyme A biosynthesis; CoA from (R)-pantothenate: step 1/5. The polypeptide is Pantothenate kinase (Lacticaseibacillus paracasei (strain ATCC 334 / BCRC 17002 / CCUG 31169 / CIP 107868 / KCTC 3260 / NRRL B-441) (Lactobacillus paracasei)).